Consider the following 553-residue polypeptide: Heterochromatin protein 1-binding protein 3 (553 aa).

An N-acetylalanine modification is found at alanine 2. Serine 6 is modified (phosphoserine). The disordered stretch occupies residues 30–131; it reads LGEKADDSTM…SKEKEKKVKK (102 aa). Threonine 51 carries the post-translational modification Phosphothreonine. Acidic residues predominate over residues 60-71; sequence GEEEKPEPDGSS. Lysine 64 participates in a covalent cross-link: Glycyl lysine isopeptide (Lys-Gly) (interchain with G-Cter in SUMO2). Threonine 85 is subject to Phosphothreonine. The segment covering 91–127 has biased composition (basic and acidic residues); it reads REAEQPKGEPESGEKEESKSAEETKKEEKDQSKEKEK. Lysine 97 is covalently cross-linked (Glycyl lysine isopeptide (Lys-Gly) (interchain with G-Cter in SUMO2)). A phosphoserine mark is found at serine 142, serine 155, and serine 156. An H15 1 domain is found at 157 to 232; it reads PRPKMDAILT…GASGSFVVVQ (76 aa). N6-acetyllysine is present on lysine 190. Residues 231-251 are disordered; it reads VQKSKTPQKSKNRKKGSAVDP. Residues 236–246 are compositionally biased toward basic residues; the sequence is TPQKSKNRKKG. A Phosphoserine modification is found at serine 247. The short motif at 253–257 is the PxVxL motif element; that stretch reads PQVKL. 2 consecutive H15 domains span residues 253 to 328 and 335 to 411; these read PQVK…QLKK and LGGS…QLCF. Lysine 256 participates in a covalent cross-link: Glycyl lysine isopeptide (Lys-Gly) (interchain with G-Cter in SUMO2). Residues 422-553 are disordered; sequence PKKVSDGSED…MKKKSFKTKK (132 aa). Acidic residues predominate over residues 428-449; that stretch reads GSEDEDEEEDEEESSEDSEDEE. 3 positions are modified to phosphoserine: serine 441, serine 442, and serine 445. Basic residues-rich tracts occupy residues 488–509 and 542–553; these read GKVR…RKGR and SAMKKKSFKTKK.

As to quaternary structure, interacts (via PxVxL motif) with CBX5.

The protein localises to the nucleus. Its subcellular location is the chromosome. Component of heterochromatin that maintains heterochromatin integrity during G1/S progression and regulates the duration of G1 phase to critically influence cell proliferative capacity. May play a role in hypoxia-induced oncogenesis. This Rattus norvegicus (Rat) protein is Heterochromatin protein 1-binding protein 3 (Hp1bp3).